Reading from the N-terminus, the 96-residue chain is MHTFLTARLQAIEDVSNRNLSMLELILTRAIVTHWIILDLVLNLIFDSLITSFVIIYSLYSFVARNNKVLLFLLMSYAIFRFIVMYLLYIVSESID.

2 consecutive transmembrane segments (helical) span residues I36 to I56 and L71 to V91.

This sequence belongs to the chordopoxvirinae L2 family.

It localises to the virion membrane. Its subcellular location is the host cytoplasm. In terms of biological role, early protein involved in early virion morphogenesis. Participates in the formation and elongation of crescent-shaped membrane precursors of immature virions in cytoplasmic factories. This chain is Protein FPV129, found in Vertebrata (FPV).